The chain runs to 326 residues: Microtubule-associated protein RP/EB family member 2 (326 aa).

Residue S9 is modified to Phosphoserine. Positions 56 to 158 constitute a Calponin-homology (CH) domain; it reads TMSRHDIIAW…FIQWFKKFYD (103 aa). Position 166 is a phosphotyrosine (Y166). Disordered regions lie at residues 170–239 and 298–326; these read EARQ…DKDL and ASDEHEGHPEEPEAEEQVHEQQPQQQEEY. Residues 186–326 form a DCTN1-binding region; the sequence is QIFNLPKKSH…EQQPQQQEEY (141 aa). The segment covering 199–233 has biased composition (low complexity); that stretch reads SPTAGAAKSSPASKPGSTPSRPSSAKRASSSGSAS. Phosphoserine occurs at positions 218 and 235. Residues 235 to 305 form the EB1 C-terminal domain; that stretch reads SDKDLETQVI…LYASDEHEGH (71 aa). Residues 258-301 form an APC-binding region; that stretch reads EGVEKERDFYFGKLREIELLCQEHGQENDDLVQRLMDVLYASDE. Basic and acidic residues predominate over residues 299-316; sequence SDEHEGHPEEPEAEEQVH. Over residues 317–326 the composition is skewed to low complexity; the sequence is EQQPQQQEEY.

This sequence belongs to the MAPRE family. As to quaternary structure, interacts with DCTN1. Interacts with APC (via C-terminal). Interacts with monomeric and polymerized tubulin. Interacts with SLAIN1. Interacts (via the N-terminal region) with BAG1. Interacts with ASB14. Interacts with HAX1; this interaction is essential for epidermal cell migration. In terms of processing, phosphorylated at Ser-235 by CK2 leading to enhanced cell adhesion. Phosphorylated by CDK1 and AURKB during mitosis reduces the binding affinity of MAPRE2 for microtubules. Ubiquitinated in an ASB14-dependent manner; leading to proteasomal degradation.

It localises to the cytoplasm. The protein localises to the cytoskeleton. Adapter protein that is involved in microtubule polymerization, and spindle function by stabilizing microtubules and anchoring them at centrosomes. Therefore, ensures mitotic progression and genome stability. Acts as a central regulator of microtubule reorganization in apico-basal epithelial differentiation. Plays a role during oocyte meiosis by regulating microtubule dynamics. Participates in neurite growth by interacting with plexin B3/PLXNB3 and microtubule reorganization during apico-basal epithelial differentiation. Also plays an essential role for cell migration and focal adhesion dynamics. Mechanistically, recruits HAX1 to microtubules in order to regulate focal adhesion dynamics. In Bos taurus (Bovine), this protein is Microtubule-associated protein RP/EB family member 2 (MAPRE2).